We begin with the raw amino-acid sequence, 873 residues long: Sister chromatid cohesion protein PDS5 homolog C (873 aa).

HEAT repeat units lie at residues 53 to 92 (NALTPLMKGLVGGKLFKHSDVDVKVAVAACISEITRITAP), 99 to 136 (DQMKEVFKLIVSSFEDLVDKSSRSYAKRISILETVAKV), 149 to 187 (ALLIEMFQHFLKAIRDHHSGNVFSSMENIMTLVLEESED), and 189 to 227 (PSEMLSPILHSVKKDDEISQVSRRLAEQVLSNCASKLKT). The span at 266 to 301 (NEKEDSQGHIKRETEVEKAAEISTPERTDAPKDESG) shows a compositional bias: basic and acidic residues. Disordered stretches follow at residues 266–611 (NEKE…LVGS) and 658–873 (SPLD…KRKR). Thr289 is subject to Phosphothreonine. Residues 303 to 319 (SGVSNGVAQQNDSSVDT) show a composition bias toward polar residues. The span at 320–334 (DSMKKQDDTGAKDEP) shows a compositional bias: basic and acidic residues. A compositionally biased stretch (polar residues) spans 336 to 348 (QLDNPRNTDLNNT). Basic and acidic residues-rich tracts occupy residues 349-365 (TEEKPDVEHQIEEKENE) and 373-394 (DLSKDSDIKEETEPAELLDSKD). 2 stretches are compositionally biased toward polar residues: residues 400-411 (PVDSSVTAATSS) and 418-438 (SVQILPSKTSGDETANVSSPS). The segment covering 456-466 (KKKESSTEEVK) has biased composition (basic and acidic residues). Low complexity predominate over residues 494-510 (KVASSSKTKPTVPPSKK). Basic and acidic residues-rich tracts occupy residues 511 to 526 (STSETKVAKQSEKKVV) and 535 to 555 (TKPKEEKKKPGRGKAIDEESL). Residues 661 to 681 (DESELSQDEEAADQTGQEEDA) show a composition bias toward acidic residues. Positions 701–725 (SSAKKGSGAGSSKAKATPASKSSKT) are enriched in low complexity. Positions 726-746 (SQDDKTASKSKDSKEASREEE) are enriched in basic and acidic residues. Positions 747–757 (ASSEEESEEEE) are enriched in acidic residues. Low complexity-rich tracts occupy residues 795 to 814 (KATTSSKSKSGPVKSVPAKS) and 822 to 831 (KSGSASTPAS). Residues 844–853 (ETPKEPEPAT) are compositionally biased toward basic and acidic residues. Over residues 854–866 (KAKSGKSQGSQSK) the composition is skewed to low complexity.

It belongs to the PDS5 family. As to quaternary structure, interacts with the cohesin complex.

It localises to the nucleus. Functionally, cohesin cofactor dispensable during the meiotic division but playing an important role in DNA repair by homologous recombination (HR) probably by helping SMC5/SMC6 complex. Regulator of sister chromatid cohesion in mitosis which may stabilize cohesin complex association with chromatin. May couple sister chromatid cohesion during mitosis to DNA replication. Cohesion ensures that chromosome partitioning is accurate in both meiotic and mitotic cells and plays an important role in DNA repair. The sequence is that of Sister chromatid cohesion protein PDS5 homolog C from Arabidopsis thaliana (Mouse-ear cress).